The chain runs to 406 residues: 11-beta-hydroxysteroid dehydrogenase type 2 (406 aa).

Residue Thr-82 to Ala-111 coordinates NAD(+). Ser-219 provides a ligand contact to substrate. Catalysis depends on Tyr-232, which acts as the Proton acceptor. The disordered stretch occupies residues Gly-379 to Arg-406.

It belongs to the short-chain dehydrogenases/reductases (SDR) family. Interacts with ligand-free cytoplasmic NR3C2. Highly expressed in the kidney.

The protein resides in the microsome. It is found in the endoplasmic reticulum. It catalyses the reaction an 11beta-hydroxysteroid + NAD(+) = an 11-oxosteroid + NADH + H(+). The enzyme catalyses corticosterone + NAD(+) = 11-dehydrocorticosterone + NADH + H(+). The catalysed reaction is cortisol + NAD(+) = cortisone + NADH + H(+). It carries out the reaction 11beta,17beta-dihydroxyandrost-4-ene-3-one + NAD(+) = 17beta-hydroxyandrost-4-ene-3,11-dione + NADH + H(+). It catalyses the reaction 11beta-hydroxyandrost-4-ene-3,17-dione + NAD(+) = androst-4-ene-3,11,17-trione + NADH + H(+). It functions in the pathway steroid metabolism. Inhibited by carbenoloxone. Catalyzes the conversion of biologically active 11beta-hydroxyglucocorticoids (11beta-hydroxysteroid) such as corticosterone, to inactive 11-ketoglucocorticoids (11-oxosteroid) such as 11-dehydrocorticosterone, in the presence of NAD(+). Functions as a dehydrogenase (oxidase), thereby decreasing the concentration of active glucocorticoids, thus protecting the nonselective mineralocorticoid receptor from occupation by glucocorticoids. Plays an important role in maintaining glucocorticoids balance during preimplantation and protects the fetus from excessive maternal corticosterone exposure. Catalyzes the oxidation of 11beta-hydroxytestosterone (11beta,17beta-dihydroxyandrost-4-ene-3-one) to 11-ketotestosterone (17beta-hydroxyandrost-4-ene-3,11-dione), a major bioactive androgen. Catalyzes the conversion of 11beta-hydroxyandrostenedione (11beta-hydroxyandrost-4-ene-3,17-dione) to 11-ketoandrostenedione (androst-4-ene-3,11,17-trione), which can be further metabolized to 11-ketotestosterone. Converts 7-beta-25-dihydroxycholesterol to 7-oxo-25-hydroxycholesterol in vitro. 7-beta-25-dihydroxycholesterol (not 7-oxo-25-hydroxycholesterol) acts as a ligand for the G-protein-coupled receptor (GPCR) Epstein-Barr virus-induced gene 2 (EBI2) and may thereby regulate immune cell migration. May protect ovulating oocytes and fertilizing spermatozoa from the adverse effects of cortisol. The protein is 11-beta-hydroxysteroid dehydrogenase type 2 (HSD11B2) of Oryctolagus cuniculus (Rabbit).